A 372-amino-acid chain; its full sequence is Delta-type opioid receptor (372 aa).

Topologically, residues 1 to 47 (MEPVPSARAELQFSLLANVSDTFPSAFPSASANASGSPGARSASSLA) are extracellular. N-linked (GlcNAc...) asparagine glycans are attached at residues asparagine 18 and asparagine 33. The chain crosses the membrane as a helical span at residues 48 to 75 (LAIAITALYSAVCAVGLLGNVLVMFGIV). The Cytoplasmic segment spans residues 76–85 (RYTKLKTATN). The helical transmembrane segment at 86–110 (IYIFNLALADALATSTLPFQSAKYL) threads the bilayer. The Extracellular segment spans residues 111-122 (METWPFGELLCK). A disulfide bridge connects residues cysteine 121 and cysteine 198. Residues 123–144 (AVLSIDYYNMFTSIFTLTMMSV) traverse the membrane as a helical segment. Residues 145-163 (DRYIAVCHPVKALDFRTPA) lie on the Cytoplasmic side of the membrane. The helical transmembrane segment at 164-186 (KAKLINICIWVLASGVGVPIMVM) threads the bilayer. The Extracellular portion of the chain corresponds to 187 to 206 (AVTQPRDGAVVCTLQFPSPS). A helical transmembrane segment spans residues 207–238 (WYWDTVTKICVFLFAFVVPILIITVCYGLMLL). Topologically, residues 239–261 (RLRSVRLLSGSKEKDRSLRRITR) are cytoplasmic. The chain crosses the membrane as a helical span at residues 262–284 (MVLVVVGAFVVCWAPIHIFVIVW). Topologically, residues 285–299 (TLVDINRRDPLVVAA) are extracellular. A helical transmembrane segment spans residues 300–321 (LHLCIALGYANSSLNPVLYAFL). Residues 322-372 (DENFKRCFRQLCRAPCGGQEPGSLRRPRQATARERVTACTPSDGPGGGAAA) lie on the Cytoplasmic side of the membrane. The S-palmitoyl cysteine moiety is linked to residue cysteine 333. The segment at 340–372 (QEPGSLRRPRQATARERVTACTPSDGPGGGAAA) is disordered.

The protein belongs to the G-protein coupled receptor 1 family. In terms of assembly, may form homooligomers. Forms a heterodimer with OPRM1. Interacts with GPRASP1. Interacts with RTP4; the interaction promotes cell surface localization of the OPRD1-OPRM1 heterodimer. Ubiquitinated. A basal ubiquitination seems not to be related to degradation. Ubiquitination is increased upon formation of OPRM1:OPRD1 oligomers leading to proteasomal degradation; the ubiquitination is diminished by RTP4. In terms of tissue distribution, detected in brain, brain stem and brain cortex.

The protein localises to the cell membrane. Its function is as follows. G-protein coupled receptor that functions as a receptor for endogenous enkephalins and for a subset of other opioids. Ligand binding causes a conformation change that triggers signaling via guanine nucleotide-binding proteins (G proteins) and modulates the activity of down-stream effectors, such as adenylate cyclase. Signaling leads to the inhibition of adenylate cyclase activity. Inhibits neurotransmitter release by reducing calcium ion currents and increasing potassium ion conductance. Plays a role in the perception of pain and in opiate-mediated analgesia. Plays a role in developing analgesic tolerance to morphine. The polypeptide is Delta-type opioid receptor (Oprd1) (Rattus norvegicus (Rat)).